Here is a 232-residue protein sequence, read N- to C-terminus: UPF0758 protein FN0909 (232 aa).

Positions 110–232 (KISNKDILLK…YFSFLEEGLI (123 aa)) constitute an MPN domain. Zn(2+) is bound by residues histidine 181, histidine 183, and aspartate 194. The JAMM motif signature appears at 181-194 (HNHPSDNITPSKSD).

This sequence belongs to the UPF0758 family.

This chain is UPF0758 protein FN0909, found in Fusobacterium nucleatum subsp. nucleatum (strain ATCC 25586 / DSM 15643 / BCRC 10681 / CIP 101130 / JCM 8532 / KCTC 2640 / LMG 13131 / VPI 4355).